The following is a 339-amino-acid chain: MTVRVAINGFGRIGRNVVRALYESGRRAEITVVAINELADAAGMAHLLKYDTSHGRFAWEVRQERDQLCVGDDAIRVLHERSLQSLPWRELGVDVVLDCTGVYGSREHGEAHIAAGAKKVLFSHPGSNDLDATVVYGVNQDQLRAEHRIVSNASCTTNCIIPVIKLLDDAYGIESGTVTTIHSAMHDQQVIDAYHPDLRRTRAASQSIIPVDTKLAAGITRFFPQFNDRFEAIAVRVPTINVTAIDLSVTVKKPVKANEVNLLLQKAAQGAFHGIVDYTELPLVSVDFNHDPHSAIVDGTQTRVSGAHLIKTLVWCDNEWGFANRMLDTTLAMATVAFR.

Residues 12–13 (RI) and Arg-81 each bind NAD(+). Substrate is bound by residues 154–156 (SCT), Arg-200, 213–214 (TK), and Arg-236. Cys-155 acts as the Nucleophile in catalysis. Residue Asn-318 participates in NAD(+) binding.

The protein belongs to the glyceraldehyde-3-phosphate dehydrogenase family. Epd subfamily. As to quaternary structure, homotetramer.

It is found in the cytoplasm. It carries out the reaction D-erythrose 4-phosphate + NAD(+) + H2O = 4-phospho-D-erythronate + NADH + 2 H(+). Its pathway is cofactor biosynthesis; pyridoxine 5'-phosphate biosynthesis; pyridoxine 5'-phosphate from D-erythrose 4-phosphate: step 1/5. In terms of biological role, catalyzes the NAD-dependent conversion of D-erythrose 4-phosphate to 4-phosphoerythronate. This Escherichia fergusonii (strain ATCC 35469 / DSM 13698 / CCUG 18766 / IAM 14443 / JCM 21226 / LMG 7866 / NBRC 102419 / NCTC 12128 / CDC 0568-73) protein is D-erythrose-4-phosphate dehydrogenase.